Here is a 545-residue protein sequence, read N- to C-terminus: CTP synthase (545 aa).

The interval 1–266 (MTTRYIFVTG…DELVIKRFNI (266 aa)) is amidoligase domain. Ser14 serves as a coordination point for CTP. A UTP-binding site is contributed by Ser14. ATP is bound by residues 15–20 (SLGKGI) and Asp72. Asp72 and Glu140 together coordinate Mg(2+). CTP-binding positions include 147–149 (DIE), 187–192 (KTKPTQ), and Lys223. UTP is bound by residues 187 to 192 (KTKPTQ) and Lys223. 239–241 (KDV) contacts ATP. The Glutamine amidotransferase type-1 domain maps to 291–542 (TIGMVGKYIE…IAASLSHQKR (252 aa)). Residue Gly352 participates in L-glutamine binding. Catalysis depends on Cys379, which acts as the Nucleophile; for glutamine hydrolysis. L-glutamine contacts are provided by residues 380-383 (LGMQ), Glu403, and Arg470. Active-site residues include His515 and Glu517.

Belongs to the CTP synthase family. In terms of assembly, homotetramer.

The catalysed reaction is UTP + L-glutamine + ATP + H2O = CTP + L-glutamate + ADP + phosphate + 2 H(+). It catalyses the reaction L-glutamine + H2O = L-glutamate + NH4(+). The enzyme catalyses UTP + NH4(+) + ATP = CTP + ADP + phosphate + 2 H(+). It functions in the pathway pyrimidine metabolism; CTP biosynthesis via de novo pathway; CTP from UDP: step 2/2. Allosterically activated by GTP, when glutamine is the substrate; GTP has no effect on the reaction when ammonia is the substrate. The allosteric effector GTP functions by stabilizing the protein conformation that binds the tetrahedral intermediate(s) formed during glutamine hydrolysis. Inhibited by the product CTP, via allosteric rather than competitive inhibition. In terms of biological role, catalyzes the ATP-dependent amination of UTP to CTP with either L-glutamine or ammonia as the source of nitrogen. Regulates intracellular CTP levels through interactions with the four ribonucleotide triphosphates. The protein is CTP synthase of Shewanella denitrificans (strain OS217 / ATCC BAA-1090 / DSM 15013).